A 62-amino-acid polypeptide reads, in one-letter code: Large ribosomal subunit protein bL28 (62 aa).

The protein belongs to the bacterial ribosomal protein bL28 family.

The polypeptide is Large ribosomal subunit protein bL28 (Carboxydothermus hydrogenoformans (strain ATCC BAA-161 / DSM 6008 / Z-2901)).